A 273-amino-acid chain; its full sequence is Rhamnulose-1-phosphate aldolase (273 aa).

Residue glutamate 117 is part of the active site. Residues histidine 140, histidine 142, and histidine 211 each contribute to the Zn(2+) site.

Belongs to the aldolase class II family. RhaD subfamily. Zn(2+) serves as cofactor.

Its subcellular location is the cytoplasm. It catalyses the reaction L-rhamnulose 1-phosphate = (S)-lactaldehyde + dihydroxyacetone phosphate. It functions in the pathway carbohydrate degradation; L-rhamnose degradation; glycerone phosphate from L-rhamnose: step 3/3. Its function is as follows. Catalyzes the reversible cleavage of L-rhamnulose-1-phosphate to dihydroxyacetone phosphate (DHAP) and L-lactaldehyde. In Listeria monocytogenes serotype 4b (strain F2365), this protein is Rhamnulose-1-phosphate aldolase.